The following is a 170-amino-acid chain: Acireductone dioxygenase (170 aa).

Residues histidine 99, histidine 101, glutamate 105, and histidine 144 each coordinate Fe(2+). Residues histidine 99, histidine 101, glutamate 105, and histidine 144 each coordinate Ni(2+).

This sequence belongs to the acireductone dioxygenase (ARD) family. As to quaternary structure, monomer. The cofactor is Fe(2+). It depends on Ni(2+) as a cofactor.

The enzyme catalyses 1,2-dihydroxy-5-(methylsulfanyl)pent-1-en-3-one + O2 = 3-(methylsulfanyl)propanoate + CO + formate + 2 H(+). It carries out the reaction 1,2-dihydroxy-5-(methylsulfanyl)pent-1-en-3-one + O2 = 4-methylsulfanyl-2-oxobutanoate + formate + 2 H(+). It functions in the pathway amino-acid biosynthesis; L-methionine biosynthesis via salvage pathway; L-methionine from S-methyl-5-thio-alpha-D-ribose 1-phosphate: step 5/6. Its function is as follows. Catalyzes 2 different reactions between oxygen and the acireductone 1,2-dihydroxy-3-keto-5-methylthiopentene (DHK-MTPene) depending upon the metal bound in the active site. Fe-containing acireductone dioxygenase (Fe-ARD) produces formate and 2-keto-4-methylthiobutyrate (KMTB), the alpha-ketoacid precursor of methionine in the methionine recycle pathway. Ni-containing acireductone dioxygenase (Ni-ARD) produces methylthiopropionate, carbon monoxide and formate, and does not lie on the methionine recycle pathway. This chain is Acireductone dioxygenase, found in Bacillus mycoides (strain KBAB4) (Bacillus weihenstephanensis).